A 382-amino-acid polypeptide reads, in one-letter code: Chaperone protein DnaJ (382 aa).

The J domain occupies 5-70 (DYYEVLGVSR…DKKAAYDRYG (66 aa)). The CR-type zinc-finger motif lies at 141 to 219 (GVQKTINVPA…CHGAGRVEKE (79 aa)). Positions 154, 157, 171, 174, 193, 196, 207, and 210 each coordinate Zn(2+). 4 CXXCXGXG motif repeats span residues 154-161 (CDSCKGTG), 171-178 (CPTCSGMG), 193-200 (CPTCNGMG), and 207-214 (CKSCHGAG).

It belongs to the DnaJ family. As to quaternary structure, homodimer. Zn(2+) is required as a cofactor.

It is found in the cytoplasm. In terms of biological role, participates actively in the response to hyperosmotic and heat shock by preventing the aggregation of stress-denatured proteins and by disaggregating proteins, also in an autonomous, DnaK-independent fashion. Unfolded proteins bind initially to DnaJ; upon interaction with the DnaJ-bound protein, DnaK hydrolyzes its bound ATP, resulting in the formation of a stable complex. GrpE releases ADP from DnaK; ATP binding to DnaK triggers the release of the substrate protein, thus completing the reaction cycle. Several rounds of ATP-dependent interactions between DnaJ, DnaK and GrpE are required for fully efficient folding. Also involved, together with DnaK and GrpE, in the DNA replication of plasmids through activation of initiation proteins. The sequence is that of Chaperone protein DnaJ from Cereibacter sphaeroides (strain ATCC 17025 / ATH 2.4.3) (Rhodobacter sphaeroides).